Here is a 302-residue protein sequence, read N- to C-terminus: MASSSSPPAAMEVGESTNWTELPPELTSAILHRLGAIEILENAQKVCRSWRRVCKDPSMWRKIDMHNLGDLDDMDYNLEIMCRHAVDRSQGGLVDIGIWYFGTVDLLNYIAHRSSNLRSLRLIRCSQITDDGFVEAVVKLPLEELELSYCSFSVESLRVVGQCCLNMKTLKLNKHPQKENDDDALAIAETMPKLRHLQLCGNGLSDTGLNAILDNCSNLEHLDLRRCFNVNLVGDLQKRCFESVKVVRHPNDSIHDIDIGSSEDEDPYDFSDIDLMSGDDDFEGYYDFSGASDFSDYDQFDF.

Residues 16 to 63 enclose the F-box domain; it reads STNWTELPPELTSAILHRLGAIEILENAQKVCRSWRRVCKDPSMWRKI.

Part of a SCF (ASK-cullin-F-box) protein ligase complex. Interacts with CUL1 and SPK1B/ASK2.

The protein resides in the nucleus. It functions in the pathway protein modification; protein ubiquitination. In terms of biological role, component of SCF(ASK-cullin-F-box) E3 ubiquitin ligase complexes, which may mediate the ubiquitination and subsequent proteasomal degradation of target proteins. This is F-box protein SKIP19 (SKIP19) from Arabidopsis thaliana (Mouse-ear cress).